The following is a 248-amino-acid chain: MAELDPFGAPAGAPGGPALGNGVAGAGEEDPAAAFLAQQESEIAGIENDEAFAILDGGAPGPQPHGEPPGGPDAVDGVMNGEYYQESNGPTDSYAAISQVDRLQSEPESIRKWREEQMERLEALDANSRKQEAEWKEKAIKELEEWYARQDEQLQKTKANNRVADEAFYKQPFADVIGYVTNINHPCYSLEQAAEEAFVNDIDESSPGTEWERVARLCDFNPKSSKQAKDVSRMRSVLISLKQAPLVH.

A disordered region spans residues 1–92; the sequence is MAELDPFGAP…YYQESNGPTD (92 aa). Residues 13 to 25 are compositionally biased toward gly residues; it reads APGGPALGNGVAG. The segment covering 61 to 71 has biased composition (pro residues); that stretch reads GPQPHGEPPGG. The tract at residues 100–162 is involved in binding clathrin heavy chain; sequence VDRLQSEPES…QLQKTKANNR (63 aa). Phosphoserine occurs at positions 105 and 206. Lys223 is modified (N6-acetyllysine). Ser236 carries the phosphoserine modification. Lys242 carries the post-translational modification N6-acetyllysine.

It belongs to the clathrin light chain family. Clathrin coats are formed from molecules containing 3 heavy chains and 3 light chains. Interacts with CALY; the interaction stimulates clathrin self-assembly and clathrin-mediated endocytosis. Interacts with CKAP5 and TACC3 forming the TACC3/ch-TOG/clathrin complex located at spindle inter-microtubules bridges; the complex implicates clathrin triskelions.

The protein resides in the cytoplasmic vesicle membrane. The protein localises to the membrane. Its subcellular location is the coated pit. It localises to the cytoplasm. It is found in the cytoskeleton. The protein resides in the spindle. In terms of biological role, clathrin is the major protein of the polyhedral coat of coated pits and vesicles. Acts as a component of the TACC3/ch-TOG/clathrin complex proposed to contribute to stabilization of kinetochore fibers of the mitotic spindle by acting as inter-microtubule bridge. This Homo sapiens (Human) protein is Clathrin light chain A (CLTA).